The sequence spans 461 residues: Bacterial E1-like protein BilD (461 aa).

Cys-385 serves as the catalytic Glycyl thioester intermediate.

In terms of biological role, component of the Bil (bacterial ISG15-like) antiviral defense system, composed of BilA, BilB, BilC and BilD. The Bil system specifically conjugates a ubiquitin-like moiety (bilA) to the bacteriophage central tail fiber (CTF, or tip attachment protein J) via reactions involving E1 (bilD) and E2 (bilB). Modifies CTF of phage SECphi27 and SECphi4, which probably interferes with assembly of the phage tail. Also modifies T5 baseplate hub protein pb3 (gene D16), but not gp27 of phage T6 (Bil defends against T6). BilD (E1) catalyzes the first step in conjugation. Activates ubiquitin-like BilA by first adenylating its C-terminal glycine residue with ATP, and then conjugates it to the side chain of a cysteine residue in E1 (this protein), yielding a ubiquitin-E1 thioester and free AMP. Bil-encoding bacteria produce mostly defective phage SECphi27, many of which have phage assembly defects, including no tails. SECphi27 phage progeny produced in E.coli with the Bil system inject less DNA into naive host cells, maybe because the phage are less able to adsorb and inject their DNA into host cells. Expression of the Bil system in E.coli (strain MG1655) confers about 100-fold resistance to phage SECphi27, SECphi18, SECphi6, SECphi4 and T5, but not to SECphi17. When cells expressing the Bil system are infected by phage SECphi27 at low multiplicity of infection (0.03 MOI) the culture survives, at 3.0 MOI the culture collapses at the same time as cells without the Bil system. In Collimonas sp. (strain OK412), this protein is Bacterial E1-like protein BilD.